The primary structure comprises 488 residues: ATP synthase subunit beta (488 aa).

164–171 (GGAGVGKT) lines the ATP pocket.

It belongs to the ATPase alpha/beta chains family. As to quaternary structure, F-type ATPases have 2 components, CF(1) - the catalytic core - and CF(0) - the membrane proton channel. CF(1) has five subunits: alpha(3), beta(3), gamma(1), delta(1), epsilon(1). CF(0) has four main subunits: a(1), b(1), b'(1) and c(9-12).

It is found in the cellular thylakoid membrane. It carries out the reaction ATP + H2O + 4 H(+)(in) = ADP + phosphate + 5 H(+)(out). In terms of biological role, produces ATP from ADP in the presence of a proton gradient across the membrane. The catalytic sites are hosted primarily by the beta subunits. The sequence is that of ATP synthase subunit beta from Prochlorococcus marinus (strain MIT 9303).